Here is a 164-residue protein sequence, read N- to C-terminus: V-type proton ATPase 16 kDa proteolipid subunit (164 aa).

At 1 to 9 the chain is on the lumenal side; that stretch reads MSNFAGDET. Residues 10–32 form a helical membrane-spanning segment; that stretch reads APFFGFLGAAAALVFSCMGAAYG. Topologically, residues 33–54 are cytoplasmic; that stretch reads TAKSGVGVASMGVMRPELVMKS. The chain crosses the membrane as a helical span at residues 55–75; the sequence is IVPVVMAGVLGIYGLIIAVII. Topologically, residues 76 to 94 are lumenal; sequence STGINPKTKSYYLFDGYAH. Residues 95-116 form a helical membrane-spanning segment; sequence LSSGLACGLAGLSAGMAIGIVG. The Cytoplasmic segment spans residues 117–128; it reads DAGVRANAQQPK. The helical transmembrane segment at 129–154 threads the bilayer; the sequence is LFVGMILILIFAEALALYGLIVGIIL. The Lumenal segment spans residues 155–164; the sequence is SSRAGQSRAE.

It belongs to the V-ATPase proteolipid subunit family. V-ATPase is a heteromultimeric enzyme composed of a peripheral catalytic V1 complex (main components: subunits A, B, C, D, E, and F) attached to an integral membrane V0 proton pore complex (main component: the proteolipid protein; which is present as a hexamer that forms the proton-conducting pore).

It localises to the vacuole membrane. Proton-conducting pore forming subunit of the membrane integral V0 complex of vacuolar ATPase. V-ATPase is responsible for acidifying a variety of intracellular compartments in eukaryotic cells. This chain is V-type proton ATPase 16 kDa proteolipid subunit, found in Solanum lycopersicum (Tomato).